Here is a 70-residue protein sequence, read N- to C-terminus: MATNIVGKVKWYNSTKNFGFIEQENGGKDVFVHKSAVDAAGLHSLEEGQYVIFDLEEKQGKAYAVNLRIK.

Positions 7–67 (GKVKWYNSTK…KQGKAYAVNL (61 aa)) constitute a CSD domain.

The protein resides in the cytoplasm. This Rickettsia felis (strain ATCC VR-1525 / URRWXCal2) (Rickettsia azadi) protein is Cold shock-like protein CspA (cspA).